The primary structure comprises 122 residues: Phospholipase A2 crotoxin basic subunit CBd (122 aa).

Cystine bridges form between Cys-26–Cys-115, Cys-28–Cys-44, Cys-43–Cys-95, Cys-49–Cys-122, Cys-50–Cys-88, Cys-57–Cys-81, and Cys-75–Cys-86. Tyr-27, Gly-29, and Gly-31 together coordinate Ca(2+). Residue His-47 is part of the active site. Asp-48 serves as a coordination point for Ca(2+). Asp-89 is an active-site residue.

Belongs to the phospholipase A2 family. Group II subfamily. D49 sub-subfamily. As to quaternary structure, heterodimer of one of the acidic (CA1, CA2, CA3 or CA4) and one of the basic (CBa1, CBa2, CBb, CBc or CBd) subunits; non-covalently linked. The acidic subunit is non-toxic, without enzymatic activity and comprises 3 peptides that are cross-linked by 5 disulfide bridges. The basic subunit is toxic, has phospholipase A2 activity and is composed of a single chain. Multiple variants of each subunit give different crotoxin complexes that can be subdivided into 2 classes: (1) those of high toxicity, low PLA2 activity (CBb, CBc and CBd linked with high affinity to any CA) and high stability (K(d)=4.5 nM) and (2) those of moderate toxicity, high PLA2 activity (CBa2 linked with low affinity to any CA) and low stability (K(d)=25 nM). Interacts with crotoxin inhibitor from Crotalus serum (CICS); the interaction leads to dissociation of the CA-CB heterodimer and to inhibition of PLA2 activity of the CB subunit. Interacts with human NBD1 domain of CFTR. Requires Ca(2+) as cofactor. In terms of tissue distribution, expressed by the venom gland.

Its subcellular location is the secreted. The catalysed reaction is a 1,2-diacyl-sn-glycero-3-phosphocholine + H2O = a 1-acyl-sn-glycero-3-phosphocholine + a fatty acid + H(+). Heterodimer CA-CB: Crotoxin is a potent presynaptic neurotoxin that possesses phospholipase A2 (PLA2) activity and exerts a lethal action by blocking neuromuscular transmission. It consists of a non-covalent association of a basic and weakly toxic PLA2 subunit (CBa2, CBb, CBc, or CBd), with a small acidic, non-enzymatic and non-toxic subunit (CA1, CA2, CA3 or CA4). The complex acts by binding to a specific 48-kDa protein (R48) receptor located on presynaptic membranes, forming a transient ternary complex CA-CB-R48, followed by dissociation of the CA-CB complex and release of the CA subunit. At equilibrium, only the CB subunits remain associated with the specific crotoxin receptor. In addition to neurotoxicity, crotoxin has been found to exert myotoxicity, nephrotoxicity, and cardiovascular toxicity. Moreover, anti-inflammatory, immunomodulatory, anti-tumor and analgesic effects of crotoxin have also been reported. In terms of biological role, monomer CBd: The basic subunit of crotoxin is a snake venom phospholipase A2 (PLA2) that exhibits weak neurotoxicity (10-fold less than the heterodimer) and very strong anticoagulant effects by binding to factor Xa (F10) and inhibiting the prothrombinase activity. In addition, it shows the same effects described for the heterodimer and binds the nucleotide-binding domain (NBD1) of CFTR chloride channels and increases the channel current. PLA2 catalyzes the calcium-dependent hydrolysis of the 2-acyl groups in 3-sn-phosphoglycerides. This chain is Phospholipase A2 crotoxin basic subunit CBd, found in Crotalus durissus terrificus (South American rattlesnake).